We begin with the raw amino-acid sequence, 184 residues long: Elongation factor P 1 (184 aa).

Belongs to the elongation factor P family.

It is found in the cytoplasm. It functions in the pathway protein biosynthesis; polypeptide chain elongation. Involved in peptide bond synthesis. Stimulates efficient translation and peptide-bond synthesis on native or reconstituted 70S ribosomes in vitro. Probably functions indirectly by altering the affinity of the ribosome for aminoacyl-tRNA, thus increasing their reactivity as acceptors for peptidyl transferase. The protein is Elongation factor P 1 (efp1) of Protochlamydia amoebophila (strain UWE25).